Reading from the N-terminus, the 350-residue chain is Nicotinate-nucleotide--dimethylbenzimidazole phosphoribosyltransferase (350 aa).

The Proton acceptor role is filled by E317.

This sequence belongs to the CobT family.

It catalyses the reaction 5,6-dimethylbenzimidazole + nicotinate beta-D-ribonucleotide = alpha-ribazole 5'-phosphate + nicotinate + H(+). The protein operates within nucleoside biosynthesis; alpha-ribazole biosynthesis; alpha-ribazole from 5,6-dimethylbenzimidazole: step 1/2. Its function is as follows. Catalyzes the synthesis of alpha-ribazole-5'-phosphate from nicotinate mononucleotide (NAMN) and 5,6-dimethylbenzimidazole (DMB). This chain is Nicotinate-nucleotide--dimethylbenzimidazole phosphoribosyltransferase, found in Shewanella sp. (strain MR-7).